Consider the following 264-residue polypeptide: COP9 signalosome complex subunit 7b (264 aa).

An N-acetylalanine modification is found at Ala-2. The 158-residue stretch at 2 to 159 (AGEQKPSSNL…QLLEVDFCIG (158 aa)) folds into the PCI domain. Residues 194–237 (RANQYKENHHRTQQQVEAEVSNIKKTLKATASSSAQEMEQQLAE) are a coiled coil. Over residues 223 to 232 (TASSSAQEME) the composition is skewed to polar residues. Positions 223–264 (TASSSAQEMEQQLAERECPPHTEQRQPTKKMSKVKGLVSSRH) are disordered. The segment covering 235 to 248 (LAERECPPHTEQRQ) has biased composition (basic and acidic residues).

This sequence belongs to the CSN7/EIF3M family. CSN7 subfamily. As to quaternary structure, component of the CSN complex, composed of COPS1/GPS1, COPS2, COPS3, COPS4, COPS5, COPS6, COPS7 (COPS7A or COPS7B) and COPS8 and COPS9. In the complex, it probably interacts directly with COPS1, COPS2, COPS4, COPS5, COPS6 and COPS8. Interacts with EIF3S6.

The protein resides in the cytoplasm. Its subcellular location is the nucleus. In terms of biological role, component of the COP9 signalosome complex (CSN), a complex involved in various cellular and developmental processes. The CSN complex is an essential regulator of the ubiquitin (Ubl) conjugation pathway by mediating the deneddylation of the cullin subunits of SCF-type E3 ligase complexes, leading to decrease the Ubl ligase activity of SCF-type complexes such as SCF, CSA or DDB2. The complex is also involved in phosphorylation of p53/TP53, JUN, I-kappa-B-alpha/NFKBIA, ITPK1 and IRF8/ICSBP, possibly via its association with CK2 and PKD kinases. CSN-dependent phosphorylation of TP53 and JUN promotes and protects degradation by the Ubl system, respectively. The sequence is that of COP9 signalosome complex subunit 7b (Cops7b) from Mus musculus (Mouse).